Consider the following 486-residue polypeptide: Malonate-semialdehyde dehydrogenase (486 aa).

The NAD(+) site is built by F154, K178, E181, R182, and S231. The active-site Nucleophile is C286. NAD(+) is bound at residue E386.

It belongs to the aldehyde dehydrogenase family. IolA subfamily. As to quaternary structure, homotetramer.

The enzyme catalyses 3-oxopropanoate + NAD(+) + CoA + H2O = hydrogencarbonate + acetyl-CoA + NADH + H(+). It catalyses the reaction 2-methyl-3-oxopropanoate + NAD(+) + CoA + H2O = propanoyl-CoA + hydrogencarbonate + NADH + H(+). It participates in polyol metabolism; myo-inositol degradation into acetyl-CoA; acetyl-CoA from myo-inositol: step 7/7. In terms of biological role, catalyzes the oxidation of malonate semialdehyde (MSA) and methylmalonate semialdehyde (MMSA) into acetyl-CoA and propanoyl-CoA, respectively. Is involved in a myo-inositol catabolic pathway. Bicarbonate, and not CO2, is the end-product of the enzymatic reaction. This Bacillus pumilus (strain SAFR-032) protein is Malonate-semialdehyde dehydrogenase.